The following is an 886-amino-acid chain: DNA double-strand break repair Rad50 ATPase (886 aa).

ATP contacts are provided by residues 32-38 and Gln-137; that span reads NGAGKSS. Coiled-coil stretches lie at residues 181 to 240 and 320 to 416; these read IRSL…KEIK and RKKE…GDLN. The Zinc-hook domain occupies 391–489; that stretch reads IKDVSDRINQ…EREELEATRN (99 aa). Residues Cys-437 and Cys-440 each coordinate Zn(2+). Coiled coils occupy residues 450–657 and 682–718; these read AKIR…ISEL and EADK…EESK.

It belongs to the SMC family. RAD50 subfamily. As to quaternary structure, homodimer. Forms a heterotetramer composed of two Mre11 subunits and two Rad50 subunits. Interacts with Mre11 and HerA. Requires Zn(2+) as cofactor.

Part of the Rad50/Mre11 complex, which is involved in the early steps of DNA double-strand break (DSB) repair. The complex may facilitate opening of the processed DNA ends to aid in the recruitment of HerA and NurA. Rad50 controls the balance between DNA end bridging and DNA resection via ATP-dependent structural rearrangements of the Rad50/Mre11 complex. The sequence is that of DNA double-strand break repair Rad50 ATPase from Sulfolobus acidocaldarius (strain ATCC 33909 / DSM 639 / JCM 8929 / NBRC 15157 / NCIMB 11770).